A 640-amino-acid polypeptide reads, in one-letter code: DNA mismatch repair protein MutL (640 aa).

The tract at residues 343 to 389 (TKNTATDQRAENLEVKPDSKEKELQPKESQHPRLVACDLPSGKIMPP) is disordered. Residues 350–373 (QRAENLEVKPDSKEKELQPKESQH) are compositionally biased toward basic and acidic residues.

It belongs to the DNA mismatch repair MutL/HexB family.

This protein is involved in the repair of mismatches in DNA. It is required for dam-dependent methyl-directed DNA mismatch repair. May act as a 'molecular matchmaker', a protein that promotes the formation of a stable complex between two or more DNA-binding proteins in an ATP-dependent manner without itself being part of a final effector complex. The polypeptide is DNA mismatch repair protein MutL (Desulforamulus reducens (strain ATCC BAA-1160 / DSM 100696 / MI-1) (Desulfotomaculum reducens)).